We begin with the raw amino-acid sequence, 195 residues long: ATP-dependent Clp protease proteolytic subunit (195 aa).

The active-site Nucleophile is Ser-98. His-123 is a catalytic residue.

The protein belongs to the peptidase S14 family. Fourteen ClpP subunits assemble into 2 heptameric rings which stack back to back to give a disk-like structure with a central cavity, resembling the structure of eukaryotic proteasomes.

The protein localises to the cytoplasm. It catalyses the reaction Hydrolysis of proteins to small peptides in the presence of ATP and magnesium. alpha-casein is the usual test substrate. In the absence of ATP, only oligopeptides shorter than five residues are hydrolyzed (such as succinyl-Leu-Tyr-|-NHMec, and Leu-Tyr-Leu-|-Tyr-Trp, in which cleavage of the -Tyr-|-Leu- and -Tyr-|-Trp bonds also occurs).. Functionally, cleaves peptides in various proteins in a process that requires ATP hydrolysis. Has a chymotrypsin-like activity. Plays a major role in the degradation of misfolded proteins. The sequence is that of ATP-dependent Clp protease proteolytic subunit from Helicobacter pylori (strain Shi470).